Reading from the N-terminus, the 297-residue chain is Large ribosomal subunit protein uL18 (297 aa).

Position 2 is an N-acetylglycine (Gly-2). N6-acetyllysine is present on residues Lys-5 and Lys-48. Position 185 is a phosphoserine (Ser-185). Lys-220 is subject to N6-acetyllysine; alternate. Residue Lys-220 forms a Glycyl lysine isopeptide (Lys-Gly) (interchain with G-Cter in SUMO1); alternate linkage. Lys-220 is covalently cross-linked (Glycyl lysine isopeptide (Lys-Gly) (interchain with G-Cter in SUMO2); alternate). A Phosphothreonine modification is found at Thr-232. The segment at 253–297 (YEKKPKREVKKKRWNRPKMSLAQKKDRVAQKKASFLRAQERAAES) is disordered. The segment covering 258–268 (KREVKKKRWNR) has biased composition (basic residues). Ser-272 bears the Phosphoserine mark.

This sequence belongs to the universal ribosomal protein uL18 family. In terms of assembly, component of the large ribosomal subunit (LSU). Part of the 5S RNP complex, which is a LSU subcomplex composed of the 5S RNA, RPL5 and RPL11. Component of a hexameric 5S RNP precursor complex, composed of 5S RNA, RRS1, RPF2/BXDC1, RPL5, RPL11 and HEATR3; this complex acts as a precursor for ribosome assembly. Interacts with isoform 1 of NVL in an ATP-dependent manner. Interacts with RRP1B. Interacts with IPO5, IPO7 and KPNB1; these interactions may be involved in RPL5 nuclear import for the assembly of ribosomal subunits.

The protein resides in the cytoplasm. It is found in the nucleus. Its subcellular location is the nucleolus. In terms of biological role, component of the ribosome, a large ribonucleoprotein complex responsible for the synthesis of proteins in the cell. The small ribosomal subunit (SSU) binds messenger RNAs (mRNAs) and translates the encoded message by selecting cognate aminoacyl-transfer RNA (tRNA) molecules. The large subunit (LSU) contains the ribosomal catalytic site termed the peptidyl transferase center (PTC), which catalyzes the formation of peptide bonds, thereby polymerizing the amino acids delivered by tRNAs into a polypeptide chain. The nascent polypeptides leave the ribosome through a tunnel in the LSU and interact with protein factors that function in enzymatic processing, targeting, and the membrane insertion of nascent chains at the exit of the ribosomal tunnel. As part of the 5S RNP/5S ribonucleoprotein particle it is an essential component of the LSU, required for its formation and the maturation of rRNAs. It also couples ribosome biogenesis to p53/TP53 activation. As part of the 5S RNP it accumulates in the nucleoplasm and inhibits MDM2, when ribosome biogenesis is perturbed, mediating the stabilization and the activation of TP53. The chain is Large ribosomal subunit protein uL18 (RPL5) from Oryctolagus cuniculus (Rabbit).